A 158-amino-acid chain; its full sequence is Transcription elongation factor GreA (158 aa).

This sequence belongs to the GreA/GreB family.

Functionally, necessary for efficient RNA polymerase transcription elongation past template-encoded arresting sites. The arresting sites in DNA have the property of trapping a certain fraction of elongating RNA polymerases that pass through, resulting in locked ternary complexes. Cleavage of the nascent transcript by cleavage factors such as GreA or GreB allows the resumption of elongation from the new 3'terminus. GreA releases sequences of 2 to 3 nucleotides. In Yersinia pestis, this protein is Transcription elongation factor GreA.